We begin with the raw amino-acid sequence, 486 residues long: UDP-N-acetylmuramate--L-alanine ligase (486 aa).

Position 126–132 (126–132 (GTHGKTS)) interacts with ATP.

Belongs to the MurCDEF family.

The protein resides in the cytoplasm. The catalysed reaction is UDP-N-acetyl-alpha-D-muramate + L-alanine + ATP = UDP-N-acetyl-alpha-D-muramoyl-L-alanine + ADP + phosphate + H(+). The protein operates within cell wall biogenesis; peptidoglycan biosynthesis. Its function is as follows. Cell wall formation. This is UDP-N-acetylmuramate--L-alanine ligase from Buchnera aphidicola subsp. Baizongia pistaciae (strain Bp).